A 382-amino-acid chain; its full sequence is Neuropeptide Y receptor type 2 (382 aa).

A disordered region spans residues 1 to 39; that stretch reads MGPIGAEADENQTVEEMKMEPSGPGHTTPRGELAPDSEP. The Extracellular segment spans residues 1-46; the sequence is MGPIGAEADENQTVEEMKMEPSGPGHTTPRGELAPDSEPELKDSTK. The N-linked (GlcNAc...) asparagine glycan is linked to asparagine 11. A helical transmembrane segment spans residues 47 to 67; it reads LIEVQIILILAYCSIILLGVV. The Cytoplasmic portion of the chain corresponds to 68–87; sequence GNSLVIHVVIKFKSMRTVTN. A helical transmembrane segment spans residues 88–108; it reads FFIANLAVADLLVNTLCLPFT. Topologically, residues 109-125 are extracellular; sequence LTYTLMGEWKMGPVLCH. An intrachain disulfide couples cysteine 124 to cysteine 204. The chain crosses the membrane as a helical span at residues 126–146; sequence LVPYAQGLAVQVSTITLTVIA. Residues 147–166 are Cytoplasmic-facing; it reads LDRHRCIVYHLESKISKRIS. A helical membrane pass occupies residues 167–187; sequence FLIIGLAWGISALLASPLAIF. At 188 to 217 the chain is on the extracellular side; sequence REYSLIEIIPDFEIVACTEKWPGEEKSIYG. Residues 218-238 form a helical membrane-spanning segment; sequence TVYSLSSLLILYVLPLGIISF. Over 239–269 the chain is Cytoplasmic; sequence SYARIWSKLKNHVSPGGVNDHYHQRRQKTTK. The helical transmembrane segment at 270 to 290 threads the bilayer; the sequence is MLVCVVVVFAVSWLPLHAFQL. Residues 291-305 lie on the Extracellular side of the membrane; that stretch reads AVDIDSQVLDLKEYK. The helical transmembrane segment at 306 to 326 threads the bilayer; the sequence is LIFTVFHIIAMCSTFANPLLY. Residues 327 to 382 are Cytoplasmic-facing; sequence GWMNSNYRKAFLSAFRCEQRLDAIHSEVSMTSKAKKNLEATKNGGPDDSFTEATNV. Cysteine 343 carries the S-palmitoyl cysteine lipid modification. Residues 363-382 are disordered; it reads NLEATKNGGPDDSFTEATNV.

The protein belongs to the G-protein coupled receptor 1 family.

It localises to the cell membrane. In terms of biological role, receptor for neuropeptide Y and peptide YY. The chain is Neuropeptide Y receptor type 2 (NPY2R) from Sus scrofa (Pig).